Consider the following 70-residue polypeptide: Cytoinsectotoxin-2c (70 aa).

This sequence belongs to the cationic peptide 06 (cytoinsectotoxin) family. As to expression, expressed by the venom gland.

The protein localises to the secreted. In terms of biological role, insecticidal and antimicrobial peptide. Has insecticidal activity against larvae of flesh fly S.carnaria. Has antibacterial activity against Gram-positive bacterium B.subtilis B-501 (MIC=1.25 uM) and Gram-negative bacterium E.coli DH5alpha (MIC=2.5 uM). This chain is Cytoinsectotoxin-2c, found in Lachesana tarabaevi (Spider).